Reading from the N-terminus, the 138-residue chain is Basic phospholipase A2 Cll-N6 (138 aa).

The first 16 residues, 1-16 (MRTFWIVAVLLVGVEG), serve as a signal peptide directing secretion. 7 disulfides stabilise this stretch: Cys-42–Cys-131, Cys-44–Cys-60, Cys-59–Cys-111, Cys-65–Cys-138, Cys-66–Cys-104, Cys-73–Cys-97, and Cys-91–Cys-102. Tyr-43, Gly-45, and Gly-47 together coordinate Ca(2+). His-63 is a catalytic residue. Asp-64 provides a ligand contact to Ca(2+). The active site involves Asp-105.

Monomer. Ca(2+) serves as cofactor. As to expression, expressed by the venom gland.

Its subcellular location is the secreted. It carries out the reaction a 1,2-diacyl-sn-glycero-3-phosphocholine + H2O = a 1-acyl-sn-glycero-3-phosphocholine + a fatty acid + H(+). In terms of biological role, snake venom phospholipase A2 (PLA2) that shows myotoxic activities. PLA2 catalyzes the calcium-dependent hydrolysis of the 2-acyl groups in 3-sn-phosphoglycerides. In Crotalus lepidus lepidus (Mottled rock rattlesnake), this protein is Basic phospholipase A2 Cll-N6.